A 570-amino-acid chain; its full sequence is Dual specificity testis-specific protein kinase 2 (570 aa).

The Protein kinase domain occupies 58–313 (DFTREKIGSG…EIGKTLEEIM (256 aa)). ATP-binding positions include 64–72 (IGSGFFSEV) and lysine 87. Aspartate 176 serves as the catalytic Proton acceptor. Serine 219 is subject to Phosphoserine; by autocatalysis. Serine 369, serine 456, and serine 460 each carry phosphoserine. The interval 513–570 (DCSNPQEENGFVPRPKGTSPCSGAASEEMEVEEERPRRAPVHFSISGISLQTQGEQDG) is disordered. The segment covering 558–570 (SGISLQTQGEQDG) has biased composition (polar residues).

It belongs to the protein kinase superfamily. TKL Ser/Thr protein kinase family. Mg(2+) is required as a cofactor. Requires Mn(2+) as cofactor. In terms of tissue distribution, predominantly expressed in testis and prostate. Found predominantly in non-germinal Sertoli cells.

It localises to the nucleus. The enzyme catalyses L-seryl-[protein] + ATP = O-phospho-L-seryl-[protein] + ADP + H(+). The catalysed reaction is L-threonyl-[protein] + ATP = O-phospho-L-threonyl-[protein] + ADP + H(+). It catalyses the reaction L-tyrosyl-[protein] + ATP = O-phospho-L-tyrosyl-[protein] + ADP + H(+). Its activity is regulated as follows. Activated by autophosphorylation on Ser-219. Functionally, dual specificity protein kinase activity catalyzing autophosphorylation and phosphorylation of exogenous substrates on both serine/threonine and tyrosine residues. Phosphorylates cofilin at 'Ser-3'. May play an important role in spermatogenesis. The protein is Dual specificity testis-specific protein kinase 2 (Tesk2) of Rattus norvegicus (Rat).